Consider the following 95-residue polypeptide: Aspartyl/glutamyl-tRNA(Asn/Gln) amidotransferase subunit C (95 aa).

Belongs to the GatC family. Heterotrimer of A, B and C subunits.

The catalysed reaction is L-glutamyl-tRNA(Gln) + L-glutamine + ATP + H2O = L-glutaminyl-tRNA(Gln) + L-glutamate + ADP + phosphate + H(+). It carries out the reaction L-aspartyl-tRNA(Asn) + L-glutamine + ATP + H2O = L-asparaginyl-tRNA(Asn) + L-glutamate + ADP + phosphate + 2 H(+). Its function is as follows. Allows the formation of correctly charged Asn-tRNA(Asn) or Gln-tRNA(Gln) through the transamidation of misacylated Asp-tRNA(Asn) or Glu-tRNA(Gln) in organisms which lack either or both of asparaginyl-tRNA or glutaminyl-tRNA synthetases. The reaction takes place in the presence of glutamine and ATP through an activated phospho-Asp-tRNA(Asn) or phospho-Glu-tRNA(Gln). The polypeptide is Aspartyl/glutamyl-tRNA(Asn/Gln) amidotransferase subunit C (Alkalilimnicola ehrlichii (strain ATCC BAA-1101 / DSM 17681 / MLHE-1)).